Consider the following 1206-residue polypeptide: DNA-directed RNA polymerase subunit beta' (1206 aa).

Zn(2+)-binding residues include cysteine 60, cysteine 62, cysteine 75, and cysteine 78. Mg(2+) is bound by residues aspartate 449, aspartate 451, and aspartate 453. Zn(2+)-binding residues include cysteine 822, cysteine 896, cysteine 903, and cysteine 906.

It belongs to the RNA polymerase beta' chain family. As to quaternary structure, the RNAP catalytic core consists of 2 alpha, 1 beta, 1 beta' and 1 omega subunit. When a sigma factor is associated with the core the holoenzyme is formed, which can initiate transcription. Mg(2+) is required as a cofactor. It depends on Zn(2+) as a cofactor.

The enzyme catalyses RNA(n) + a ribonucleoside 5'-triphosphate = RNA(n+1) + diphosphate. In terms of biological role, DNA-dependent RNA polymerase catalyzes the transcription of DNA into RNA using the four ribonucleoside triphosphates as substrates. This Staphylococcus haemolyticus (strain JCSC1435) protein is DNA-directed RNA polymerase subunit beta'.